A 334-amino-acid polypeptide reads, in one-letter code: Transposase for insertion sequence element IS1328 (334 aa).

Belongs to the transposase IS1111A/IS1328/IS1533 family.

Functionally, required for the transposition of the insertion element. This Yersinia enterocolitica protein is Transposase for insertion sequence element IS1328.